The following is an 842-amino-acid chain: Glucans biosynthesis glucosyltransferase H (842 aa).

The next 6 membrane-spanning stretches (helical) occupy residues 141–161 (LLLL…TILP), 194–214 (ILLL…TALM), 513–533 (VFLT…FLAL), 570–590 (LFAS…ILIW), 615–635 (VLLA…AFLG), and 680–700 (FLFW…VSVI).

Belongs to the glycosyltransferase 2 family. OpgH subfamily.

The protein resides in the cell inner membrane. The protein operates within glycan metabolism; osmoregulated periplasmic glucan (OPG) biosynthesis. Involved in the biosynthesis of osmoregulated periplasmic glucans (OPGs). This Enterobacter sp. (strain 638) protein is Glucans biosynthesis glucosyltransferase H.